The primary structure comprises 1157 residues: MDPHWKRHDSSNIPTQPSPSASPKSNKPSSAQRFGNLPWVAPDVIQSQIEYLQALQMQQSLSESENYLQPNFFPFQSGPFSKSRRENTLLPRLNPLAPIGARQPNPSIPQQFSKPINESGTGTMGPAVGELTSPVMKNRAESIFSPVTESFEAFTQGMQTTPQRAGAGVSTATSHTRRRSSAGTDPFSPVSPSNPNFLTPLKPIDGNQEWQQSPLESPLSMHSLQESLHSVEPESPIFQQAPQIPLSNASQQSYINHSSDGASLPQSSFLNFNSSGKRVSVSAAAQQHKNLFLPYLPQASLPKFIGTGKLLVGTLHINRKNRSDAYVITDVLDEPIFICGSKDRNRTLEGDLVAVELLDVNEIMQTKREKEEKKIRRNLSLSGSSKYSVNSKAKMMSISTPMALGMNRGVLSFERSIEKRKNDYEVTGQSLSFVDDVSLTPDSAPKYAGHVVAVLNRPSGETCSGTLALYRPNSLALKNQSSHRRNSSTSSGETGKGPKIVWFKPSDKRIPLIAISSDQVPPTFFTNNDDFKDKVFLAGIKRWPTTSLHPFGTLYESIGTIGDPKVEYKAILHDFSCHTYDFPESLSHCVKRLPTPIPAEELQKRYNLRDKLTFMIGTRDYALHIDTGSIDGVITLGIHVADVAYYVKQDMPLDDEAANRVSEVQLLQGSVPFLPKKVSEEISLIEGHDCLTISIVVQLDLKSGAVLQCSLGPSVIHPSSFISLESAQANLQTNEALQLVDASAHVLTKLRLKTDKKLDLQSLYCFEFCDGQIPNIQNINMSIFEAFPIACSLQQIEHWVNEKVASHLMSVFPSKVILRKNQRPSDFASLVAVSELTGVNLSASSTPSEIMTEIATTKDKRTKMLLQLTLRRMCNESEYTIGTSNAKDVSHFVFSCPYYTHFCHPTRRYIDICVQRQLREAFDGRPDFSKDYRSLLSITQSCNTLSNFYRNAQEKSLHAYLCQLLHSINLRSGLVKHKAFVLAVDQEYIDIVIYEFGLERRISLDLLPLSNCDFNEQKHELYLSWRTNASFFYASSSLEIDTPCFNDFKKKFLDSNGMCKQICDMMDAQVRDLANAAESQESFYSKARGNDSTSKTAKSSSGNQDISGDGKLHSLRMKEPEVVQTIRPGQEVSVLIFADTSATYSLSLITLQSPLSS.

A compositionally biased stretch (basic and acidic residues) spans 1 to 10; that stretch reads MDPHWKRHDS. Disordered regions lie at residues 1 to 35, 159 to 233, and 478 to 498; these read MDPHWKRHDSSNIPTQPSPSASPKSNKPSSAQRFG, QTTP…SVEP, and KNQSSHRRNSSTSSGETGKGP. Composition is skewed to low complexity over residues 18 to 31 and 181 to 197; these read SPSASPKSNKPSSA and SAGTDPFSPVSPSNPNF. Positions 208–228 are enriched in polar residues; sequence QEWQQSPLESPLSMHSLQESL. Positions 501–574 constitute a CSD2 domain; that stretch reads VWFKPSDKRI…KVEYKAILHD (74 aa). The 314-residue stretch at 608 to 921 folds into the RNB domain; it reads LRDKLTFMIG…ICVQRQLREA (314 aa). The region spanning 973-1030 is the DIS3L2 C-terminal domain; sequence GLVKHKAFVLAVDQEYIDIVIYEFGLERRISLDLLPLSNCDFNEQKHELYLSWRTNAS. Positions 1084–1113 are disordered; the sequence is YSKARGNDSTSKTAKSSSGNQDISGDGKLH. Residues 1090–1106 show a composition bias toward polar residues; the sequence is NDSTSKTAKSSSGNQDI.

Belongs to the RNR ribonuclease family.

The protein localises to the cytoplasm. This is an uncharacterized protein from Schizosaccharomyces pombe (strain 972 / ATCC 24843) (Fission yeast).